The sequence spans 295 residues: MASAREIRRRIKSVKNTGKITKAMELVSASKMRRAQRNVLATRPYADRLYDVMGELTLRSMGGGTKHPLLQPHPTVTRVALILITPDRGLCGALNSNLTRAAARFITDQKSQGRSVSVIAIGKKGRDFILRVGQKLDSEIIGLGDAPPLVDVLPAATTAINGYSPDASGNYDYDEVYLLCAEFVNTLVQRPKLRRFLPVEAPGNAGATKVDYSYEPSQEDVLDQLLPRFIEVQLYQAILESIASEHSARMMAMRNANDNAKELVRDLTLTYNKARQAAITTEISEIAAGATALNQ.

Belongs to the ATPase gamma chain family. F-type ATPases have 2 components, CF(1) - the catalytic core - and CF(0) - the membrane proton channel. CF(1) has five subunits: alpha(3), beta(3), gamma(1), delta(1), epsilon(1). CF(0) has three main subunits: a, b and c.

Its subcellular location is the cell membrane. Its function is as follows. Produces ATP from ADP in the presence of a proton gradient across the membrane. The gamma chain is believed to be important in regulating ATPase activity and the flow of protons through the CF(0) complex. The sequence is that of ATP synthase gamma chain from Herpetosiphon aurantiacus (strain ATCC 23779 / DSM 785 / 114-95).